The sequence spans 307 residues: Glycine--tRNA ligase alpha subunit (307 aa).

The protein belongs to the class-II aminoacyl-tRNA synthetase family. In terms of assembly, tetramer of two alpha and two beta subunits.

The protein localises to the cytoplasm. It catalyses the reaction tRNA(Gly) + glycine + ATP = glycyl-tRNA(Gly) + AMP + diphosphate. The protein is Glycine--tRNA ligase alpha subunit of Aeromonas salmonicida (strain A449).